The following is a 336-amino-acid chain: Type II methyltransferase M.PvuII (336 aa).

2 tandem repeats follow at residues 11–113 and 181–293. The disordered stretch occupies residues 196 to 215; it reads TPKTRPSGHDIGKSFSKDNG. Residues 202–211 show a composition bias toward basic and acidic residues; that stretch reads SGHDIGKSFS.

Belongs to the N(4)/N(6)-methyltransferase family. N(4) subfamily. As to quaternary structure, monomer.

It carries out the reaction a 2'-deoxycytidine in DNA + S-adenosyl-L-methionine = an N(4)-methyl-2'-deoxycytidine in DNA + S-adenosyl-L-homocysteine + H(+). Its function is as follows. A beta subtype methylase, recognizes the double-stranded sequence 5'-CAGCTG-3', methylates C-4 on both strands, and protects the DNA from cleavage by the PvuII endonuclease. The polypeptide is Type II methyltransferase M.PvuII (Proteus hauseri).